Consider the following 96-residue polypeptide: Aspartyl/glutamyl-tRNA(Asn/Gln) amidotransferase subunit C (96 aa).

The protein belongs to the GatC family. In terms of assembly, heterotrimer of A, B and C subunits.

The enzyme catalyses L-glutamyl-tRNA(Gln) + L-glutamine + ATP + H2O = L-glutaminyl-tRNA(Gln) + L-glutamate + ADP + phosphate + H(+). It carries out the reaction L-aspartyl-tRNA(Asn) + L-glutamine + ATP + H2O = L-asparaginyl-tRNA(Asn) + L-glutamate + ADP + phosphate + 2 H(+). Its function is as follows. Allows the formation of correctly charged Asn-tRNA(Asn) or Gln-tRNA(Gln) through the transamidation of misacylated Asp-tRNA(Asn) or Glu-tRNA(Gln) in organisms which lack either or both of asparaginyl-tRNA or glutaminyl-tRNA synthetases. The reaction takes place in the presence of glutamine and ATP through an activated phospho-Asp-tRNA(Asn) or phospho-Glu-tRNA(Gln). In Exiguobacterium sibiricum (strain DSM 17290 / CCUG 55495 / CIP 109462 / JCM 13490 / 255-15), this protein is Aspartyl/glutamyl-tRNA(Asn/Gln) amidotransferase subunit C.